Here is a 631-residue protein sequence, read N- to C-terminus: Serine/threonine-protein kinase PLK3 (631 aa).

Positions 1–59 (MEPAAGFLSPRPFPRAAVPSAPPAGPGPPANASPRSEPEVLAGPRAPDPPGRLITDPLS) are disordered. The span at 20–31 (SAPPAGPGPPAN) shows a compositional bias: pro residues. The Protein kinase domain occupies 63–315 (YTKGRLLGKG…IEQILRHDFF (253 aa)). ATP is bound by residues 69 to 77 (LGKGGFARC) and Lys-92. Residue Asp-186 is the Proton acceptor of the active site. POLO box domains are found at residues 448 to 526 (WVSK…YMEQ) and 547 to 630 (LLLQ…DQSP).

This sequence belongs to the protein kinase superfamily. Ser/Thr protein kinase family. CDC5/Polo subfamily. Interacts (via the POLO-box domain) with CIB1; leading to inhibit PLK3 kinase activity. Interacts with GOLGB1. Post-translationally, phosphorylated in an ATM-dependent manner following DNA damage. Phosphorylated as cells enter mitosis and dephosphorylated as cells exit mitosis. Expressed in skin.

It localises to the cytoplasm. It is found in the nucleus. The protein resides in the nucleolus. The protein localises to the golgi apparatus. Its subcellular location is the cytoskeleton. It localises to the microtubule organizing center. It is found in the centrosome. It carries out the reaction L-seryl-[protein] + ATP = O-phospho-L-seryl-[protein] + ADP + H(+). It catalyses the reaction L-threonyl-[protein] + ATP = O-phospho-L-threonyl-[protein] + ADP + H(+). In terms of biological role, serine/threonine-protein kinase involved in cell cycle regulation, response to stress and Golgi disassembly. Polo-like kinases act by binding and phosphorylating proteins that are already phosphorylated on a specific motif recognized by the POLO box domains. Phosphorylates ATF2, BCL2L1, CDC25A, CDC25C, CHEK2, HIF1A, JUN, p53/TP53, p73/TP73, PTEN, TOP2A and VRK1. Involved in cell cycle regulation: required for entry into S phase and cytokinesis. Phosphorylates BCL2L1, leading to regulate the G2 checkpoint and progression to cytokinesis during mitosis. Plays a key role in response to stress: rapidly activated upon stress stimulation, such as ionizing radiation, reactive oxygen species (ROS), hyperosmotic stress, UV irradiation and hypoxia. Involved in DNA damage response and G1/S transition checkpoint by phosphorylating CDC25A, p53/TP53 and p73/TP73. Phosphorylates p53/TP53 in response to reactive oxygen species (ROS), thereby promoting p53/TP53-mediated apoptosis. Phosphorylates CHEK2 in response to DNA damage, promoting the G2/M transition checkpoint. Phosphorylates the transcription factor p73/TP73 in response to DNA damage, leading to inhibit p73/TP73-mediated transcriptional activation and pro-apoptotic functions. Phosphorylates HIF1A and JUN is response to hypoxia. Phosphorylates ATF2 following hyperosmotic stress in corneal epithelium. Also involved in Golgi disassembly during the cell cycle: part of a MEK1/MAP2K1-dependent pathway that induces Golgi fragmentation during mitosis by mediating phosphorylation of VRK1. May participate in endomitotic cell cycle, a form of mitosis in which both karyokinesis and cytokinesis are interrupted and is a hallmark of megakaryocyte differentiation, via its interaction with CIB1. The protein is Serine/threonine-protein kinase PLK3 (Plk3) of Mus musculus (Mouse).